Here is a 406-residue protein sequence, read N- to C-terminus: MKIYLVGGAVRDRLLQRPAGDHDWVVVGATPAQMEAQGYTAVGRDFPVFLHPKTGEEYALARTERKSGRGYRGFVVDADPGVTLEEDLQRRDFTINAIACDEETGTLVDPYGGVRDIEQRVLRHVGPAFVEDPLRVLRAARFMARFAPLGFTVAEETMALMREIAASGELDALVPERVWQELRKALVSERPSAFLRTLHDAHALGPILPELEALYGVPQRAEFHPEVDTGIHQEMVSDMAAKLAPGDDLVGFAALTHDLGKGLTPPEEWPRHIMHEQRGIKPLKALCARLKIPAEHQQLAEAVCREHLNVHRIDELRDATVLELLGRCDALRRPERVARIALCCEADKRGRLGFEDADYPQGETLKRLHQAALSVQARDLDTTHLKGPAIGEALAKARVKAIAAAR.

Residues Gly-8 and Arg-11 each contribute to the ATP site. CTP-binding residues include Gly-8 and Arg-11. Positions 21 and 23 each coordinate Mg(2+). ATP contacts are provided by Arg-91, Arg-138, and Arg-141. The CTP site is built by Arg-91, Arg-138, and Arg-141. An HD domain is found at 229-331; it reads TGIHQEMVSD…LELLGRCDAL (103 aa).

This sequence belongs to the tRNA nucleotidyltransferase/poly(A) polymerase family. Bacterial CCA-adding enzyme type 1 subfamily. As to quaternary structure, monomer. Can also form homodimers and oligomers. It depends on Mg(2+) as a cofactor. Requires Ni(2+) as cofactor.

It carries out the reaction a tRNA precursor + 2 CTP + ATP = a tRNA with a 3' CCA end + 3 diphosphate. The enzyme catalyses a tRNA with a 3' CCA end + 2 CTP + ATP = a tRNA with a 3' CCACCA end + 3 diphosphate. Its function is as follows. Catalyzes the addition and repair of the essential 3'-terminal CCA sequence in tRNAs without using a nucleic acid template. Adds these three nucleotides in the order of C, C, and A to the tRNA nucleotide-73, using CTP and ATP as substrates and producing inorganic pyrophosphate. tRNA 3'-terminal CCA addition is required both for tRNA processing and repair. Also involved in tRNA surveillance by mediating tandem CCA addition to generate a CCACCA at the 3' terminus of unstable tRNAs. While stable tRNAs receive only 3'-terminal CCA, unstable tRNAs are marked with CCACCA and rapidly degraded. In Stenotrophomonas maltophilia (strain K279a), this protein is Multifunctional CCA protein.